Consider the following 335-residue polypeptide: Aspartate carbamoyltransferase catalytic subunit (335 aa).

Carbamoyl phosphate contacts are provided by arginine 54 and threonine 55. Lysine 82 lines the L-aspartate pocket. Carbamoyl phosphate contacts are provided by arginine 104, histidine 134, and glutamine 137. L-aspartate contacts are provided by arginine 177 and arginine 232. Positions 277 and 278 each coordinate carbamoyl phosphate.

It belongs to the aspartate/ornithine carbamoyltransferase superfamily. ATCase family. Heterododecamer (2C3:3R2) of six catalytic PyrB chains organized as two trimers (C3), and six regulatory PyrI chains organized as three dimers (R2).

The catalysed reaction is carbamoyl phosphate + L-aspartate = N-carbamoyl-L-aspartate + phosphate + H(+). Its pathway is pyrimidine metabolism; UMP biosynthesis via de novo pathway; (S)-dihydroorotate from bicarbonate: step 2/3. Catalyzes the condensation of carbamoyl phosphate and aspartate to form carbamoyl aspartate and inorganic phosphate, the committed step in the de novo pyrimidine nucleotide biosynthesis pathway. The sequence is that of Aspartate carbamoyltransferase catalytic subunit from Paenarthrobacter aurescens (strain TC1).